Consider the following 339-residue polypeptide: Ketol-acid reductoisomerase (NADP(+)) (339 aa).

One can recognise a KARI N-terminal Rossmann domain in the interval 1–182 (MRVYYDRDAD…GGGRAGVIET (182 aa)). NADP(+)-binding positions include 24–27 (YGSQ), arginine 48, serine 51, threonine 53, and 83–86 (DELQ). Residue histidine 108 is part of the active site. NADP(+) is bound at residue glycine 134. The KARI C-terminal knotted domain maps to 183–328 (TFKEECETDL…KKLRSMMPWI (146 aa)). Residues aspartate 191, glutamate 195, glutamate 227, and glutamate 231 each contribute to the Mg(2+) site. Residue serine 252 participates in substrate binding.

The protein belongs to the ketol-acid reductoisomerase family. Mg(2+) is required as a cofactor.

The enzyme catalyses (2R)-2,3-dihydroxy-3-methylbutanoate + NADP(+) = (2S)-2-acetolactate + NADPH + H(+). It carries out the reaction (2R,3R)-2,3-dihydroxy-3-methylpentanoate + NADP(+) = (S)-2-ethyl-2-hydroxy-3-oxobutanoate + NADPH + H(+). Its pathway is amino-acid biosynthesis; L-isoleucine biosynthesis; L-isoleucine from 2-oxobutanoate: step 2/4. It functions in the pathway amino-acid biosynthesis; L-valine biosynthesis; L-valine from pyruvate: step 2/4. In terms of biological role, involved in the biosynthesis of branched-chain amino acids (BCAA). Catalyzes an alkyl-migration followed by a ketol-acid reduction of (S)-2-acetolactate (S2AL) to yield (R)-2,3-dihydroxy-isovalerate. In the isomerase reaction, S2AL is rearranged via a Mg-dependent methyl migration to produce 3-hydroxy-3-methyl-2-ketobutyrate (HMKB). In the reductase reaction, this 2-ketoacid undergoes a metal-dependent reduction by NADPH to yield (R)-2,3-dihydroxy-isovalerate. The sequence is that of Ketol-acid reductoisomerase (NADP(+)) from Bartonella tribocorum (strain CIP 105476 / IBS 506).